We begin with the raw amino-acid sequence, 322 residues long: Acetyl-coenzyme A carboxylase carboxyl transferase subunit alpha (322 aa).

A CoA carboxyltransferase C-terminal domain is found at alanine 43–lysine 297.

Belongs to the AccA family. Acetyl-CoA carboxylase is a heterohexamer composed of biotin carboxyl carrier protein (AccB), biotin carboxylase (AccC) and two subunits each of ACCase subunit alpha (AccA) and ACCase subunit beta (AccD).

The protein localises to the cytoplasm. The catalysed reaction is N(6)-carboxybiotinyl-L-lysyl-[protein] + acetyl-CoA = N(6)-biotinyl-L-lysyl-[protein] + malonyl-CoA. It participates in lipid metabolism; malonyl-CoA biosynthesis; malonyl-CoA from acetyl-CoA: step 1/1. Functionally, component of the acetyl coenzyme A carboxylase (ACC) complex. First, biotin carboxylase catalyzes the carboxylation of biotin on its carrier protein (BCCP) and then the CO(2) group is transferred by the carboxyltransferase to acetyl-CoA to form malonyl-CoA. This chain is Acetyl-coenzyme A carboxylase carboxyl transferase subunit alpha, found in Vesicomyosocius okutanii subsp. Calyptogena okutanii (strain HA).